A 214-amino-acid chain; its full sequence is Octanoyltransferase (214 aa).

A BPL/LPL catalytic domain is found at 29–214 (SETLDEIWVL…QHLQKQLIPS (186 aa)). Residues 69–76 (RGGEITYH), 146–148 (ALG), and 159–161 (GLA) each bind substrate. Cys177 functions as the Acyl-thioester intermediate in the catalytic mechanism.

Belongs to the LipB family.

The protein resides in the cytoplasm. It catalyses the reaction octanoyl-[ACP] + L-lysyl-[protein] = N(6)-octanoyl-L-lysyl-[protein] + holo-[ACP] + H(+). It participates in protein modification; protein lipoylation via endogenous pathway; protein N(6)-(lipoyl)lysine from octanoyl-[acyl-carrier-protein]: step 1/2. Catalyzes the transfer of endogenously produced octanoic acid from octanoyl-acyl-carrier-protein onto the lipoyl domains of lipoate-dependent enzymes. Lipoyl-ACP can also act as a substrate although octanoyl-ACP is likely to be the physiological substrate. This Polynucleobacter necessarius subsp. necessarius (strain STIR1) protein is Octanoyltransferase.